A 1147-amino-acid polypeptide reads, in one-letter code: SR-related and CTD-associated factor 4 (1147 aa).

The CID domain occupies 1-139; it reads MDAVNAFNQE…PLLDMAAGTS (139 aa). K49 is subject to N6-acetyllysine. 4 disordered regions span residues 145–179, 235–254, 269–331, and 424–502; these read AENV…AVPQ, KTTP…PEQK, DEPE…QQPA, and VKRH…KPET. S154 carries the phosphoserine modification. 2 stretches are compositionally biased toward low complexity: residues 283–292 and 299–310; these read TAVTTTAPAA and TATVPAAAAPAA. A compositionally biased stretch (basic and acidic residues) spans 424 to 433; sequence VKRHMSDNRK. Positions 434–475 are enriched in basic residues; it reads SRSRSASRSPKRRRSRSGSRSRRSRHRRSRSRSRDRRRHSPR. Residues 477–492 show a composition bias toward basic and acidic residues; it reads RSQERRDREKERERRQ. The RRM domain occupies 508–582; it reads TTLWVGQLDK…KSIKIAWALN (75 aa). Disordered stretches follow at residues 629 to 661 and 879 to 1147; these read DWKG…IPKP and RPMP…EAPR. Phosphoserine is present on S656. Over residues 879–913 the composition is skewed to pro residues; that stretch reads RPMPPHMMHRGPPPGPGGFAMPPPHGMKGPFPPHG. Positions 941–965 are enriched in low complexity; that stretch reads QQPPQQPQQQPQPQAPQQPQQQQQQ. Positions 966–977 are enriched in pro residues; that stretch reads QPPPSQQPPPTQ. S1004 is modified (phosphoserine). Residues 1009 to 1085 show a composition bias toward basic and acidic residues; that stretch reads VENDRERYGN…RGKEKPEVTD (77 aa).

Interacts with POLR2A; via C-terminal heptapeptide repeat domain (CTD) phosphorylated at 'Ser-2' and 'Ser-5'.

The protein localises to the nucleus. Its function is as follows. Anti-terminator protein required to prevent early mRNA termination during transcription. Together with SCAF8, acts by suppressing the use of early, alternative poly(A) sites, thereby preventing the accumulation of non-functional truncated proteins. Mechanistically, associates with the phosphorylated C-terminal heptapeptide repeat domain (CTD) of the largest RNA polymerase II subunit (POLR2A), and subsequently binds nascent RNA upstream of early polyadenylation sites to prevent premature mRNA transcript cleavage and polyadenylation. Independently of SCAF8, also acts as a suppressor of transcriptional readthrough. This Homo sapiens (Human) protein is SR-related and CTD-associated factor 4.